The primary structure comprises 176 residues: Ribosome maturation factor RimM (176 aa).

A PRC barrel domain is found at Lys102–Trp175.

It belongs to the RimM family. As to quaternary structure, binds ribosomal protein uS19.

Its subcellular location is the cytoplasm. Its function is as follows. An accessory protein needed during the final step in the assembly of 30S ribosomal subunit, possibly for assembly of the head region. Essential for efficient processing of 16S rRNA. May be needed both before and after RbfA during the maturation of 16S rRNA. It has affinity for free ribosomal 30S subunits but not for 70S ribosomes. This Buchnera aphidicola subsp. Acyrthosiphon pisum (strain APS) (Acyrthosiphon pisum symbiotic bacterium) protein is Ribosome maturation factor RimM.